The chain runs to 121 residues: Large ribosomal subunit protein uL14 (121 aa).

It belongs to the universal ribosomal protein uL14 family. Part of the 50S ribosomal subunit. Forms a cluster with proteins L3 and L19. In the 70S ribosome, L14 and L19 interact and together make contacts with the 16S rRNA in bridges B5 and B8.

Functionally, binds to 23S rRNA. Forms part of two intersubunit bridges in the 70S ribosome. The chain is Large ribosomal subunit protein uL14 from Synechococcus elongatus (strain ATCC 33912 / PCC 7942 / FACHB-805) (Anacystis nidulans R2).